The primary structure comprises 251 residues: S-acyl fatty acid synthase thioesterase, medium chain (251 aa).

Catalysis depends on residues S90 and H226.

The protein belongs to the thioesterase family.

It catalyses the reaction (9Z)-octadecenoyl-[ACP] + H2O = (9Z)-octadecenoate + holo-[ACP] + H(+). In fatty acid biosynthesis chain termination and release of the free fatty acid product is achieved by hydrolysis of the thio ester by a thioesterase I, a component of the fatty acid synthetase complex. The chain length of the released fatty acid is usually C16. However, in the mammary glands of non-ruminant mammals, and in the uropygial gland of certain waterfowl there exists a second thioesterase which releases medium-chain length fatty acids (C8 to C2). In Anas platyrhynchos (Mallard), this protein is S-acyl fatty acid synthase thioesterase, medium chain.